Here is a 447-residue protein sequence, read N- to C-terminus: UDP-N-acetylmuramoyl-L-alanyl-D-glutamate--2,6-diaminopimelate ligase (447 aa).

Residue Thr-21 participates in UDP-N-acetyl-alpha-D-muramoyl-L-alanyl-D-glutamate binding. 74–80 serves as a coordination point for ATP; the sequence is GTNGKTT. UDP-N-acetyl-alpha-D-muramoyl-L-alanyl-D-glutamate-binding positions include 117–118, Ser-144, Gln-150, and Arg-152; that span reads TT. Lys-184 bears the N6-carboxylysine mark. Residues Arg-340, 364 to 367, Gly-415, and Glu-419 each bind meso-2,6-diaminopimelate; that span reads DNPR. Positions 364–367 match the Meso-diaminopimelate recognition motif motif; the sequence is DNPR.

This sequence belongs to the MurCDEF family. MurE subfamily. It depends on Mg(2+) as a cofactor. Carboxylation is probably crucial for Mg(2+) binding and, consequently, for the gamma-phosphate positioning of ATP.

The protein resides in the cytoplasm. The catalysed reaction is UDP-N-acetyl-alpha-D-muramoyl-L-alanyl-D-glutamate + meso-2,6-diaminopimelate + ATP = UDP-N-acetyl-alpha-D-muramoyl-L-alanyl-gamma-D-glutamyl-meso-2,6-diaminopimelate + ADP + phosphate + H(+). Its pathway is cell wall biogenesis; peptidoglycan biosynthesis. Catalyzes the addition of meso-diaminopimelic acid to the nucleotide precursor UDP-N-acetylmuramoyl-L-alanyl-D-glutamate (UMAG) in the biosynthesis of bacterial cell-wall peptidoglycan. The sequence is that of UDP-N-acetylmuramoyl-L-alanyl-D-glutamate--2,6-diaminopimelate ligase from Helicobacter pylori (strain J99 / ATCC 700824) (Campylobacter pylori J99).